The sequence spans 180 residues: Large ribosomal subunit protein uL10 (180 aa).

Positions 161 to 180 (SKAEGSEETESNETTETVEE) are disordered. Over residues 166–180 (SEETESNETTETVEE) the composition is skewed to acidic residues.

Belongs to the universal ribosomal protein uL10 family. Part of the ribosomal stalk of the 50S ribosomal subunit. The N-terminus interacts with L11 and the large rRNA to form the base of the stalk. The C-terminus forms an elongated spine to which L12 dimers bind in a sequential fashion forming a multimeric L10(L12)X complex.

Functionally, forms part of the ribosomal stalk, playing a central role in the interaction of the ribosome with GTP-bound translation factors. This chain is Large ribosomal subunit protein uL10, found in Finegoldia magna (strain ATCC 29328 / DSM 20472 / WAL 2508) (Peptostreptococcus magnus).